The sequence spans 162 residues: Phosphopantetheine adenylyltransferase (162 aa).

S9 is a binding site for substrate. Residues 9–10 and H17 each bind ATP; that span reads SF. Substrate-binding residues include K41, V77, and K91. ATP is bound by residues 92–94, E102, and 126–132; these read GLR and YAFLSSS.

This sequence belongs to the bacterial CoaD family. In terms of assembly, homohexamer. Mg(2+) serves as cofactor.

The protein localises to the cytoplasm. It carries out the reaction (R)-4'-phosphopantetheine + ATP + H(+) = 3'-dephospho-CoA + diphosphate. The protein operates within cofactor biosynthesis; coenzyme A biosynthesis; CoA from (R)-pantothenate: step 4/5. Its function is as follows. Reversibly transfers an adenylyl group from ATP to 4'-phosphopantetheine, yielding dephospho-CoA (dPCoA) and pyrophosphate. This Frankia alni (strain DSM 45986 / CECT 9034 / ACN14a) protein is Phosphopantetheine adenylyltransferase.